The chain runs to 101 residues: Small ribosomal subunit protein uS14 (101 aa).

This sequence belongs to the universal ribosomal protein uS14 family. Part of the 30S ribosomal subunit. Contacts proteins S3 and S10.

Binds 16S rRNA, required for the assembly of 30S particles and may also be responsible for determining the conformation of the 16S rRNA at the A site. The sequence is that of Small ribosomal subunit protein uS14 from Shewanella piezotolerans (strain WP3 / JCM 13877).